The chain runs to 226 residues: Hand transcription factor 1 (226 aa).

A compositionally biased stretch (polar residues) spans 1-15 (MVKSTTAGNNAVSSL). The disordered stretch occupies residues 1-35 (MVKSTTAGNNAVSSLESTDSKKSRKEKSREKEHRR). Residues 23 to 36 (SRKEKSREKEHRRA) form a basic motif region. The bHLH domain occupies 23-77 (SRKEKSREKEHRRAQCINSAFEILQQHIPYLKSEERKSLPKIKTLRLAMQYIDHL). Residues 37-77 (QCINSAFEILQQHIPYLKSEERKSLPKIKTLRLAMQYIDHL) are helix-loop-helix motif.

The protein resides in the nucleus. Its function is as follows. Probable transcription factor which regulates early embryonic myogenesis, in cooperation with transcription factors unc-120 and hlh-1. Involved in controlling the number and position of somatic gonadal precursor cells (SGPs) in the gonadal primordium, and embryonic body shape. The chain is Hand transcription factor 1 from Caenorhabditis elegans.